We begin with the raw amino-acid sequence, 67 residues long: DNA-directed RNA polymerase subunit omega (67 aa).

This sequence belongs to the RNA polymerase subunit omega family. As to quaternary structure, the RNAP catalytic core consists of 2 alpha, 1 beta, 1 beta' and 1 omega subunit. When a sigma factor is associated with the core the holoenzyme is formed, which can initiate transcription.

The enzyme catalyses RNA(n) + a ribonucleoside 5'-triphosphate = RNA(n+1) + diphosphate. Promotes RNA polymerase assembly. Latches the N- and C-terminal regions of the beta' subunit thereby facilitating its interaction with the beta and alpha subunits. In Burkholderia ambifaria (strain ATCC BAA-244 / DSM 16087 / CCUG 44356 / LMG 19182 / AMMD) (Burkholderia cepacia (strain AMMD)), this protein is DNA-directed RNA polymerase subunit omega.